The primary structure comprises 331 residues: Phosphate acyltransferase (331 aa).

The protein belongs to the PlsX family. In terms of assembly, homodimer. Probably interacts with PlsY.

It localises to the cytoplasm. It catalyses the reaction a fatty acyl-[ACP] + phosphate = an acyl phosphate + holo-[ACP]. It participates in lipid metabolism; phospholipid metabolism. Catalyzes the reversible formation of acyl-phosphate (acyl-PO(4)) from acyl-[acyl-carrier-protein] (acyl-ACP). This enzyme utilizes acyl-ACP as fatty acyl donor, but not acyl-CoA. The protein is Phosphate acyltransferase of Malacoplasma penetrans (strain HF-2) (Mycoplasma penetrans).